A 78-amino-acid chain; its full sequence is Large ribosomal subunit protein bL28 (78 aa).

Belongs to the bacterial ribosomal protein bL28 family.

In Prochlorococcus marinus (strain MIT 9301), this protein is Large ribosomal subunit protein bL28.